A 397-amino-acid polypeptide reads, in one-letter code: Protein Brevis radix-like 1 (397 aa).

2 disordered regions span residues 14-37 and 105-148; these read GAPP…AGEC and RAGS…EDDE. Positions 124–148 are enriched in acidic residues; that stretch reads AGDEEEEEEEEEEEGTTADGSEDDE. A BRX 1 domain is found at 150-205; that stretch reads KEWVAQVEPGVLITFLSLPEGGNDLKRIRFSREIFNKWQAQRWWAENYEKVMELYN. Disordered stretches follow at residues 212–278 and 300–342; these read QTPL…QQHH and SISG…DQER. Positions 220 to 230 are enriched in basic and acidic residues; that stretch reads KSEDESLKEDI. The span at 309–320 shows a compositional bias: low complexity; the sequence is SSMDASMRSSSS. The region spanning 342–397 is the BRX 2 domain; the sequence is REWVEEDEPGVYITIRALPGGIRELRRVRFSREKFSEMHARLWWEENRARIHDQYL.

This sequence belongs to the BRX family.

The protein resides in the nucleus. This chain is Protein Brevis radix-like 1 (BRXL1), found in Oryza sativa subsp. japonica (Rice).